Consider the following 206-residue polypeptide: Ribosomal RNA small subunit methyltransferase G (206 aa).

S-adenosyl-L-methionine contacts are provided by residues Gly74, Leu79, 125–126 (VE), and Arg140.

Belongs to the methyltransferase superfamily. RNA methyltransferase RsmG family.

The protein resides in the cytoplasm. The catalysed reaction is guanosine(527) in 16S rRNA + S-adenosyl-L-methionine = N(7)-methylguanosine(527) in 16S rRNA + S-adenosyl-L-homocysteine. Specifically methylates the N7 position of guanine in position 527 of 16S rRNA. This chain is Ribosomal RNA small subunit methyltransferase G, found in Shewanella sp. (strain ANA-3).